The following is a 315-amino-acid chain: NAD kinase (315 aa).

The active-site Proton acceptor is the Asp91. Residues 91-92, Arg96, 165-166, Asp195, and 206-211 each bind NAD(+); these read DG, NE, and TAYAFS.

It belongs to the NAD kinase family. The cofactor is a divalent metal cation.

The protein localises to the cytoplasm. The catalysed reaction is NAD(+) + ATP = ADP + NADP(+) + H(+). Functionally, involved in the regulation of the intracellular balance of NAD and NADP, and is a key enzyme in the biosynthesis of NADP. Catalyzes specifically the phosphorylation on 2'-hydroxyl of the adenosine moiety of NAD to yield NADP. This is NAD kinase from Rhodococcus erythropolis (strain PR4 / NBRC 100887).